The primary structure comprises 837 residues: PE-PGRS family protein PE_PGRS4 (837 aa).

The region spanning 4-94 is the PE domain; it reads VIAAPEVIAA…GAYAAAEAAA (91 aa). Positions 811–825 are enriched in gly residues; it reads NGGKAGGTPGAGGTS. A disordered region spans residues 811–837; sequence NGGKAGGTPGAGGTSGLIIGENGLNGL. The span at 826–837 shows a compositional bias: low complexity; it reads GLIIGENGLNGL.

This sequence belongs to the mycobacterial PE family. PGRS subfamily.

This is PE-PGRS family protein PE_PGRS4 from Mycobacterium tuberculosis (strain ATCC 25618 / H37Rv).